Reading from the N-terminus, the 149-residue chain is Nucleoside diphosphate kinase (149 aa).

ATP-binding residues include K9, F57, R85, T91, R102, and N112. The active-site Pros-phosphohistidine intermediate is the H115.

The protein belongs to the NDK family. As to quaternary structure, homotetramer. It depends on Mg(2+) as a cofactor.

It is found in the cytoplasm. The enzyme catalyses a 2'-deoxyribonucleoside 5'-diphosphate + ATP = a 2'-deoxyribonucleoside 5'-triphosphate + ADP. It catalyses the reaction a ribonucleoside 5'-diphosphate + ATP = a ribonucleoside 5'-triphosphate + ADP. Major role in the synthesis of nucleoside triphosphates other than ATP. The ATP gamma phosphate is transferred to the NDP beta phosphate via a ping-pong mechanism, using a phosphorylated active-site intermediate. In Pelotomaculum thermopropionicum (strain DSM 13744 / JCM 10971 / SI), this protein is Nucleoside diphosphate kinase.